The following is a 198-amino-acid chain: MAQKKEEAAATPAAPTAARLQTLYHEKVVSALTERFKYDNVMNVPKLKKISINIGVGEAASEPKLLETALQELSQITGQKPQIRKSKKAISNFKLREGQAIGCRVTLRRKAMYEFFDRFVSIAVPRIRDFRGLPDTSFDGRGNYTVGVREQIIFPEIDIDKVPRIQGMDISFVTSATTDEEAFVLLTELGMPFKKKNN.

It belongs to the universal ribosomal protein uL5 family. As to quaternary structure, part of the 50S ribosomal subunit; part of the 5S rRNA/L5/L18/L25 subcomplex. Contacts the 5S rRNA and the P site tRNA. Forms a bridge to the 30S subunit in the 70S ribosome.

In terms of biological role, this is one of the proteins that bind and probably mediate the attachment of the 5S RNA into the large ribosomal subunit, where it forms part of the central protuberance. In the 70S ribosome it contacts protein S13 of the 30S subunit (bridge B1b), connecting the 2 subunits; this bridge is implicated in subunit movement. Contacts the P site tRNA; the 5S rRNA and some of its associated proteins might help stabilize positioning of ribosome-bound tRNAs. This Chlorobium phaeovibrioides (strain DSM 265 / 1930) (Prosthecochloris vibrioformis (strain DSM 265)) protein is Large ribosomal subunit protein uL5.